Here is a 341-residue protein sequence, read N- to C-terminus: Very-long-chain 3-oxoacyl-CoA reductase (341 aa).

A helical transmembrane segment spans residues 15-35 (VVTAFSVIGIVFTILKFTSFA). Positions 61, 115, 142, 177, 216, 220, 249, and 251 each coordinate NADP(+). The Proton donor role is filled by Y216. K220 acts as the Lowers pKa of active site Tyr in catalysis.

It belongs to the short-chain dehydrogenases/reductases (SDR) family.

It localises to the endoplasmic reticulum membrane. The enzyme catalyses a very-long-chain (3R)-3-hydroxyacyl-CoA + NADP(+) = a very-long-chain 3-oxoacyl-CoA + NADPH + H(+). Its pathway is lipid metabolism; fatty acid biosynthesis. Functionally, component of the microsomal membrane bound fatty acid elongation system, which produces the 26-carbon very long-chain fatty acids (VLCFA) from palmitate. Catalyzes the reduction of the 3-ketoacyl-CoA intermediate that is formed in each cycle of fatty acid elongation. VLCFAs serve as precursors for ceramide and sphingolipids. The sequence is that of Very-long-chain 3-oxoacyl-CoA reductase from Schizosaccharomyces pombe (strain 972 / ATCC 24843) (Fission yeast).